A 23-amino-acid chain; its full sequence is ENFAGGCTPGYQRTADGRCKPTF.

Cys-7 and Cys-19 are oxidised to a cystine.

It belongs to the GBP/PSP1/paralytic peptide family. In terms of tissue distribution, hemolymph.

Its function is as follows. Causes rapid, rigid paralysis when injected into Lepidopteran larvae. The physiological role may be to reduce hemolymph loss following injury and promote wound healing. The sequence is that of Paralytic peptide 2 from Spodoptera exigua (Beet armyworm).